We begin with the raw amino-acid sequence, 97 residues long: Nucleoid-associated protein HPAG1_0033 (97 aa).

Belongs to the YbaB/EbfC family. As to quaternary structure, homodimer.

The protein resides in the cytoplasm. The protein localises to the nucleoid. Functionally, binds to DNA and alters its conformation. May be involved in regulation of gene expression, nucleoid organization and DNA protection. The sequence is that of Nucleoid-associated protein HPAG1_0033 from Helicobacter pylori (strain HPAG1).